A 191-amino-acid polypeptide reads, in one-letter code: Glycerol-3-phosphate acyltransferase (191 aa).

The next 5 membrane-spanning stretches (helical) occupy residues 10–30, 57–77, 84–104, 118–138, and 158–178; these read LAFIIFVYVIAAIPFGRCISA, FGSVVFMLDFLKAAAPVFLAV, FASTVGFVAVFAHVFSVYMAF, FVLVLPVFIVAVCTWGIFFVL, and YALLELYVFLPILAGTVLIFI.

Belongs to the PlsY family. Probably interacts with PlsX.

It is found in the cell inner membrane. The enzyme catalyses an acyl phosphate + sn-glycerol 3-phosphate = a 1-acyl-sn-glycero-3-phosphate + phosphate. It functions in the pathway lipid metabolism; phospholipid metabolism. Functionally, catalyzes the transfer of an acyl group from acyl-phosphate (acyl-PO(4)) to glycerol-3-phosphate (G3P) to form lysophosphatidic acid (LPA). This enzyme utilizes acyl-phosphate as fatty acyl donor, but not acyl-CoA or acyl-ACP. The sequence is that of Glycerol-3-phosphate acyltransferase from Neorickettsia sennetsu (strain ATCC VR-367 / Miyayama) (Ehrlichia sennetsu).